The sequence spans 305 residues: Oligopeptide transport ATP-binding protein OppF (305 aa).

The region spanning 6 to 251 (LEIKHLKQHF…PLHPYTKSLL (246 aa)) is the ABC transporter domain. 42–49 (GESGCGKS) is an ATP binding site.

The protein belongs to the ABC transporter superfamily. As to quaternary structure, the complex is composed of two ATP-binding proteins (OppD and OppF), two transmembrane proteins (OppB and OppC) and a solute-binding protein (OppA).

The protein localises to the cell membrane. It catalyses the reaction a [peptide](out) + ATP + H2O = a [peptide](in) + ADP + phosphate + H(+). Its function is as follows. Part of the ABC transporter complex OppABCDF involved in the uptake of oligopeptides. Probably responsible for energy coupling to the transport system. Required for genetic competence but not for peptide transport or for sporulation. This is Oligopeptide transport ATP-binding protein OppF from Bacillus subtilis (strain 168).